The following is a 273-amino-acid chain: Large ribosomal subunit protein uL2c (273 aa).

Disordered regions lie at residues 30-55 (EKKL…RHRG) and 222-243 (GSAM…PIGR). Residues 45–55 (NKGRITTRHRG) are compositionally biased toward basic residues.

This sequence belongs to the universal ribosomal protein uL2 family. In terms of assembly, part of the 50S ribosomal subunit.

It localises to the plastid. In Prototheca wickerhamii, this protein is Large ribosomal subunit protein uL2c (rpl2).